Reading from the N-terminus, the 484-residue chain is METSESTDRSQSRCLDLQPSSDGLGSSSDPFSSWDGRHRSALVAATAAASAAATAASTARAAALWTKSPAPYSHGNLLTEPSSDSLTERYTGPRFTHKISHGRLGFQPAYFSHIAWNPYTTNDLSSSRGPIPGSSSGPVPGSSSSPGPDSSSDPGPSSSSGPGGSPGGSGRGPGHGPGPGGGSGQGPGGGSGQGTDLGPAIDSRHSPGHGHGPRFNFSAPVGFRNPRGDLIPNYTGCKHHCHWEPQKQSWKFLKVSEPGARGLWKPPEVEGKSTVLSETLPRGQCLLYNWEEERATNYLDQVPVMQDGSESFFFRHGHRGLLTLQPQSPTSSCTTQKDSYQPPKSHCQPIRGKREAILEMLLRQQICKEVQAEQEPTRKDSEVESVTHHDYKKELVQAGPPAPTKIHDYHTEQPETFWLERAPQLPGVSNIRTLDTPFRKNCSFSTPVPLSLEQPLPFEPESYSQHGEISSLACQGGGQGGGGG.

Over residues 1–11 (METSESTDRSQ) the composition is skewed to basic and acidic residues. Disordered stretches follow at residues 1–32 (METSESTDRSQSRCLDLQPSSDGLGSSSDPFS), 123–221 (DLSS…SAPV), and 324–348 (LQPQSPTSSCTTQKDSYQPPKSHCQ). Composition is skewed to low complexity over residues 20 to 32 (SSDGLGSSSDPFS) and 125 to 160 (SSSRGPIPGSSSGPVPGSSSSPGPDSSSDPGPSSSS). Positions 161 to 195 (GPGGSPGGSGRGPGHGPGPGGGSGQGPGGGSGQGT) are enriched in gly residues. Residues 324 to 339 (LQPQSPTSSCTTQKDS) show a composition bias toward polar residues. 2 mn regions span residues 332–345 (SCTTQKDSYQPPKS) and 384–398 (ESVTHHDYKKELVQA). Residues 455-484 (PLPFEPESYSQHGEISSLACQGGGQGGGGG) are disordered. Over residues 475–484 (QGGGQGGGGG) the composition is skewed to gly residues.

The protein belongs to the SPAG8 family. Microtubule inner protein component of sperm flagellar doublet microtubules. Interacts with FHL5 (via second LIM domain). Interacts with RANBP9. Expressed in trachea multiciliated cells.

The protein localises to the cytoplasm. The protein resides in the nucleus. It localises to the cytoplasmic vesicle. It is found in the secretory vesicle. Its subcellular location is the acrosome. The protein localises to the cytoskeleton. The protein resides in the microtubule organizing center. It localises to the spindle. It is found in the cilium axoneme. Its subcellular location is the flagellum axoneme. Functionally, microtubule inner protein (MIP) part of the dynein-decorated doublet microtubules (DMTs) in cilia axoneme, which is required for motile cilia beating. Plays a role in spermatogenesis by enhancing the binding of CREM isoform tau to its coactivator FHL5 and increasing the FHL5-regulated transcriptional activation of CREM isoform tau. Involved in the acrosome reaction and in binding of sperm to the zona pellucida. Plays a role in regulation of the cell cycle by controlling progression through the G2/M phase, possibly by delaying the activation of CDK1 which is required for entry into mitosis. May play a role in fertility and microtubule formation through interaction with RANBP9. The chain is Sperm-associated antigen 8 (SPAG8) from Bos taurus (Bovine).